The sequence spans 1062 residues: NACHT, LRR and PYD domains-containing protein 2 (1062 aa).

The 94-residue stretch at 1 to 94 folds into the Pyrin domain; that stretch reads MVSSAQMGFN…SERAKDEVRE (94 aa). The 320-residue stretch at 207–526 folds into the NACHT domain; that stretch reads YTVVLYGPAG…LEKEEEEDRD (320 aa). 213–220 lines the ATP pocket; that stretch reads GPAGLGKT. S671 carries the phosphoserine modification. 8 LRR repeats span residues 812–832, 841–861, 869–889, 898–918, 926–946, 955–976, 983–1003, and 1010–1033; these read SLTC…KLLY, FLQR…KDLA, ELTH…KFLC, KLQT…CDLT, SLLC…KFLC, NLRC…DLCS, SLVT…KMLF, and SGTL…LLEE.

This sequence belongs to the NLRP family. As to quaternary structure, interacts with CHUK. Interacts with IKBKB. Interacts with IKBKG. Interacts with MEFV. Interacts with PYCARD. Interacts (via pyrin domain) with PYDC2. Interacts with CARD8. Expressed at high levels in lung, placenta and thymus and at lower levels in ovary, intestine and brain. Highly abundant in oocytes and early embryos, however poorly expressed in somatic tissues such as brain, kidney, liver and spinal cord.

It localises to the cytoplasm. Suppresses TNF- and CD40-induced NFKB1 activity at the level of the IKK complex, by inhibiting NFKBIA degradation induced by TNF. When associated with PYCARD, activates CASP1, leading to the secretion of mature pro-inflammatory cytokine IL1B. May be a component of the inflammasome, a protein complex which also includes PYCARD, CARD8 and CASP1 and whose function would be the activation of pro-inflammatory caspases. In Homo sapiens (Human), this protein is NACHT, LRR and PYD domains-containing protein 2 (NLRP2).